Reading from the N-terminus, the 87-residue chain is Small ribosomal subunit protein uS17 (87 aa).

It belongs to the universal ribosomal protein uS17 family. As to quaternary structure, part of the 30S ribosomal subunit.

Functionally, one of the primary rRNA binding proteins, it binds specifically to the 5'-end of 16S ribosomal RNA. This Chromobacterium violaceum (strain ATCC 12472 / DSM 30191 / JCM 1249 / CCUG 213 / NBRC 12614 / NCIMB 9131 / NCTC 9757 / MK) protein is Small ribosomal subunit protein uS17.